A 136-amino-acid polypeptide reads, in one-letter code: UPF0213 protein AHA_3736 (136 aa).

The 76-residue stretch at Ser17 to Gln92 folds into the GIY-YIG domain. Positions Gln114–Asp136 are disordered. A compositionally biased stretch (basic and acidic residues) spans Glu124–Asp136.

This sequence belongs to the UPF0213 family.

The protein is UPF0213 protein AHA_3736 of Aeromonas hydrophila subsp. hydrophila (strain ATCC 7966 / DSM 30187 / BCRC 13018 / CCUG 14551 / JCM 1027 / KCTC 2358 / NCIMB 9240 / NCTC 8049).